The primary structure comprises 275 residues: NH(3)-dependent NAD(+) synthetase (275 aa).

46-53 (GISGGQDS) provides a ligand contact to ATP. Aspartate 52 is a Mg(2+) binding site. Arginine 140 is a binding site for deamido-NAD(+). Threonine 160 serves as a coordination point for ATP. Residue glutamate 165 participates in Mg(2+) binding. Lysine 173 and aspartate 180 together coordinate deamido-NAD(+). Residues lysine 189 and threonine 211 each contribute to the ATP site. A deamido-NAD(+)-binding site is contributed by 260 to 261 (HK).

The protein belongs to the NAD synthetase family. Homodimer.

The enzyme catalyses deamido-NAD(+) + NH4(+) + ATP = AMP + diphosphate + NAD(+) + H(+). It participates in cofactor biosynthesis; NAD(+) biosynthesis; NAD(+) from deamido-NAD(+) (ammonia route): step 1/1. Catalyzes the ATP-dependent amidation of deamido-NAD to form NAD. Uses ammonia as a nitrogen source. In Shigella dysenteriae serotype 1 (strain Sd197), this protein is NH(3)-dependent NAD(+) synthetase.